The following is a 195-amino-acid chain: Envelope glycoprotein L (195 aa).

The first 25 residues, 1-25, serve as a signal peptide directing secretion; the sequence is MKIYRVLVHLSFVLGMFTKTNTVLA. The interaction with gH stretch occupies residues 28–157; it reads KYDLVHGFMR…LIAPADISCY (130 aa). The 168-residue stretch at 28–195 folds into the gL alphaherpesvirus-type domain; that stretch reads KYDLVHGFMR…TTSGSRRANA (168 aa). Disulfide bonds link cysteine 49/cysteine 78 and cysteine 156/cysteine 178.

This sequence belongs to the herpesviridae glycoprotein L (gL) family. Alphaherpesvirinae gL subfamily. As to quaternary structure, interacts with glycoprotein H (gH); this interaction is necessary for the correct processing and cell surface expression of gH. The heterodimer gH/gL seems to interact with gB trimers during fusion.

It localises to the virion membrane. It is found in the host cell membrane. The protein resides in the host Golgi apparatus. The protein localises to the host trans-Golgi network. Functionally, the heterodimer glycoprotein H-glycoprotein L is required for the fusion of viral and plasma membranes leading to virus entry into the host cell. Acts as a functional inhibitor of gH and maintains gH in an inhibited form. Upon binding to host integrins, gL dissociates from gH leading to activation of the viral fusion glycoproteins gB and gH. This chain is Envelope glycoprotein L, found in Gallus gallus (Chicken).